The chain runs to 66 residues: Ribosome biogenesis protein Nop10 (66 aa).

The protein belongs to the NOP10 family.

Its function is as follows. Involved in ribosome biogenesis; more specifically in 18S rRNA pseudouridylation and in cleavage of pre-rRNA. This chain is Ribosome biogenesis protein Nop10, found in Staphylothermus marinus (strain ATCC 43588 / DSM 3639 / JCM 9404 / F1).